Reading from the N-terminus, the 168-residue chain is Photosystem I assembly protein Ycf3 (168 aa).

TPR repeat units follow at residues 35-68, 72-105, and 120-153; these read AFTY…EIDP, SYIL…NPFL, and GEQA…TPGN.

This sequence belongs to the Ycf3 family.

Its subcellular location is the plastid. It is found in the chloroplast thylakoid membrane. Functionally, essential for the assembly of the photosystem I (PSI) complex. May act as a chaperone-like factor to guide the assembly of the PSI subunits. This Amborella trichopoda protein is Photosystem I assembly protein Ycf3.